A 347-amino-acid chain; its full sequence is Phosphoribosylformylglycinamidine cyclo-ligase (347 aa).

Belongs to the AIR synthase family.

Its subcellular location is the cytoplasm. It catalyses the reaction 2-formamido-N(1)-(5-O-phospho-beta-D-ribosyl)acetamidine + ATP = 5-amino-1-(5-phospho-beta-D-ribosyl)imidazole + ADP + phosphate + H(+). It participates in purine metabolism; IMP biosynthesis via de novo pathway; 5-amino-1-(5-phospho-D-ribosyl)imidazole from N(2)-formyl-N(1)-(5-phospho-D-ribosyl)glycinamide: step 2/2. This Yersinia pestis protein is Phosphoribosylformylglycinamidine cyclo-ligase.